The sequence spans 706 residues: MCGLAKKLDIEDTLTSLSDQENESLAKPMNDAAEWEHSFSALLEFAADNDVEGFRRQLSDVSCINQMGLWYRRQRFVRRMVLEQRTPLMVASLYGSLDVVKFILSFPEAELNLSCGPDKSTALHCAASGASVNSLDVVKLLLSVGADPNIPDAHGNRPVDVLVVSPHAPGLRTILEEILKKDEIISEDLHASSSSLGSSFRSLSSSPDNGSSLLSLDSVSSPTKPHGTDVTFASEKKEYPIDPSLPDIKSGIYSTDEFRMFSFKIRPCSRAYSHDWTECPFAHPGENARRRDPRKFHYTCVPCPDFKKGSCKQGDMCEYAHGVFECWLHPAQYRTRLCKDGMGCNRRVCFFAHANEELRPLYPSTGSGLPSPRASSAVSASTMDMASVLNMLPGSPSAAQHSFTPPISPSGNGSMPHSSMGWPQQNIPALNLPGSNIQLSRLRSSLNARDIPSEQLSMLHEFEMQRQLAGDMHSPRFMNHSARPKTLNPSNLEELFSAEVASPRFSDQLAVSSVLSPSHKSALLNQLQNNKQSMLSPIKTNLMSSPKNVEQHSLLQQASSPRGGEPISPMNARMKQQLHSRSLSSRDFGSSLPRDLMPTDSGSPLSPWSSWDQTHGSKVDWSVQSDELGRLRKSHSLANNPNREADVSWAQQMLKDSSSPRNGNRVVNMNGARPLTQGGSSVNPHNSDTRESDILDAWLEQLHLDR.

2 ANK repeats span residues 83–113 and 118–150; these read EQRTPLMVASLYGSLDVVKFILSFPEAELNL and DKSTALHCAASGASVNSLDVVKLLLSVGADPNI. Residues 211 to 221 show a composition bias toward low complexity; that stretch reads SSLLSLDSVSS. The disordered stretch occupies residues 211–235; that stretch reads SSLLSLDSVSSPTKPHGTDVTFASE. C3H1-type zinc fingers lie at residues 302–324 and 332–356; these read PCPDFKKGSCKQGDMCEYAHGVF and QYRTRLCKDGMGCNRRVCFFAHANE. Disordered stretches follow at residues 396–427, 545–616, and 652–692; these read PSAAQHSFTPPISPSGNGSMPHSSMGWPQQNI, SPKN…QTHG, and QMLK…TRES. Polar residues-rich tracts occupy residues 397 to 427 and 545 to 560; these read SAAQHSFTPPISPSGNGSMPHSSMGWPQQNI and SPKNVEQHSLLQQASS. Residue S568 is modified to Phosphoserine. Low complexity predominate over residues 580-592; the sequence is SRSLSSRDFGSSL. Composition is skewed to polar residues over residues 600-616, 652-667, and 677-686; these read DSGSPLSPWSSWDQTHG, QMLKDSSSPRNGNRVV, and QGGSSVNPHN.

The polypeptide is Zinc finger CCCH domain-containing protein 56 (Arabidopsis thaliana (Mouse-ear cress)).